Reading from the N-terminus, the 1088-residue chain is ATP-dependent helicase/deoxyribonuclease subunit B (1088 aa).

It belongs to the helicase family. AddB/RexB type 2 subfamily. Heterodimer of AddA and RexB. The cofactor is Mg(2+).

The heterodimer acts as both an ATP-dependent DNA helicase and an ATP-dependent, dual-direction single-stranded exonuclease. Recognizes the chi site generating a DNA molecule suitable for the initiation of homologous recombination. This subunit has 5' -&gt; 3' nuclease activity but not helicase activity. This Streptococcus suis (strain 98HAH33) protein is ATP-dependent helicase/deoxyribonuclease subunit B.